Consider the following 245-residue polypeptide: UDP-N-acetyl-D-mannosaminuronic acid transferase (245 aa).

This sequence belongs to the glycosyltransferase 26 family.

The enzyme catalyses UDP-N-acetyl-alpha-D-mannosaminouronate + N-acetyl-alpha-D-glucosaminyl-di-trans,octa-cis-undecaprenyl diphosphate = beta-D-ManNAcA-(1-&gt;4)-alpha-D-GlcNAc-di-trans,octa-cis-undecaprenyl diphosphate + UDP + H(+). Its pathway is bacterial outer membrane biogenesis; enterobacterial common antigen biosynthesis. Catalyzes the synthesis of Und-PP-GlcNAc-ManNAcA (Lipid II), the second lipid-linked intermediate involved in enterobacterial common antigen (ECA) synthesis. In Photorhabdus laumondii subsp. laumondii (strain DSM 15139 / CIP 105565 / TT01) (Photorhabdus luminescens subsp. laumondii), this protein is UDP-N-acetyl-D-mannosaminuronic acid transferase.